The following is a 151-amino-acid chain: Large ribosomal subunit protein bL9 (151 aa).

It belongs to the bacterial ribosomal protein bL9 family.

Binds to the 23S rRNA. The chain is Large ribosomal subunit protein bL9 from Bordetella pertussis (strain Tohama I / ATCC BAA-589 / NCTC 13251).